Reading from the N-terminus, the 161-residue chain is Phosphopantetheine adenylyltransferase (161 aa).

Belongs to the eukaryotic CoaD family.

It is found in the cytoplasm. The catalysed reaction is (R)-4'-phosphopantetheine + ATP + H(+) = 3'-dephospho-CoA + diphosphate. The protein operates within cofactor biosynthesis; coenzyme A biosynthesis. Its function is as follows. Reversibly transfers an adenylyl group from ATP to 4'-phosphopantetheine, yielding dephospho-CoA (dPCoA) and pyrophosphate. The protein is Phosphopantetheine adenylyltransferase of Methanosarcina barkeri (strain Fusaro / DSM 804).